The primary structure comprises 433 residues: 3-phosphoshikimate 1-carboxyvinyltransferase (433 aa).

Residues Lys22, Ser23, and Arg27 each contribute to the 3-phosphoshikimate site. Lys22 lines the phosphoenolpyruvate pocket. Residues Gly94 and Arg122 each contribute to the phosphoenolpyruvate site. Residues Ser168, Ser169, Gln170, Ser196, Asp319, and Lys346 each coordinate 3-phosphoshikimate. Gln170 is a binding site for phosphoenolpyruvate. Asp319 (proton acceptor) is an active-site residue. Arg350, Arg394, and Lys418 together coordinate phosphoenolpyruvate.

It belongs to the EPSP synthase family. As to quaternary structure, monomer.

It localises to the cytoplasm. The enzyme catalyses 3-phosphoshikimate + phosphoenolpyruvate = 5-O-(1-carboxyvinyl)-3-phosphoshikimate + phosphate. It functions in the pathway metabolic intermediate biosynthesis; chorismate biosynthesis; chorismate from D-erythrose 4-phosphate and phosphoenolpyruvate: step 6/7. Its function is as follows. Catalyzes the transfer of the enolpyruvyl moiety of phosphoenolpyruvate (PEP) to the 5-hydroxyl of shikimate-3-phosphate (S3P) to produce enolpyruvyl shikimate-3-phosphate and inorganic phosphate. This Nitrosomonas eutropha (strain DSM 101675 / C91 / Nm57) protein is 3-phosphoshikimate 1-carboxyvinyltransferase.